The primary structure comprises 318 residues: Probable endolytic peptidoglycan transglycosylase RlpA (318 aa).

An N-terminal signal peptide occupies residues 1–21 (MMDKRVVAVAAVLWNVQMLFA). Residues 121 to 191 (DPNAHASQQR…GVANTTDVPA (71 aa)) are disordered. A compositionally biased stretch (polar residues) spans 125–137 (HASQQRNDRQTSP).

It belongs to the RlpA family.

In terms of biological role, lytic transglycosylase with a strong preference for naked glycan strands that lack stem peptides. This Treponema pallidum (strain Nichols) protein is Probable endolytic peptidoglycan transglycosylase RlpA.